The following is a 379-amino-acid chain: MSTTKRCYYETLEVERNADDSTLKSAFRKLAMKWHPDRNPGDPQCEIKFKEINEAYEVLKDGDKRAAYDRYGHAAFEQGGFGGGAGFGAGFASSFSDIFEDLFGMAAQRGRGTGRERGADLRYNMEITLEDAFKGKTAQIEIPVSVTCEACSGTGAKAGTKPKTCSTCGGAGRVRQAQGFFTLERTCPSCQGRGQTIEDPCPSCTGSGRVTKERTLSVNIPQGVEDGTRIRLAGEGEAGLRGGPPGDLYIFLSLANHAIFQRDGADLHCRVPISMVTAALGGEFEVPTIDRGKTKVKVPSGTQTGRRFRIAGKGMPVLRSRQVGDMYVQVVVETPQNLTKKQQELLAEFEKLSSGETQPEAVGFFSKVKEFFGSRASAP.

The region spanning 7–72 (CYYETLEVER…DKRAAYDRYG (66 aa)) is the J domain. A CR-type zinc finger spans residues 135-213 (GKTAQIEIPV…CTGSGRVTKE (79 aa)). Zn(2+) contacts are provided by C148, C151, C165, C168, C187, C190, C201, and C204. CXXCXGXG motif repeat units lie at residues 148-155 (CEACSGTG), 165-172 (CSTCGGAG), 187-194 (CPSCQGRG), and 201-208 (CPSCTGSG).

It belongs to the DnaJ family. As to quaternary structure, homodimer. Requires Zn(2+) as cofactor.

It localises to the cytoplasm. In terms of biological role, participates actively in the response to hyperosmotic and heat shock by preventing the aggregation of stress-denatured proteins and by disaggregating proteins, also in an autonomous, DnaK-independent fashion. Unfolded proteins bind initially to DnaJ; upon interaction with the DnaJ-bound protein, DnaK hydrolyzes its bound ATP, resulting in the formation of a stable complex. GrpE releases ADP from DnaK; ATP binding to DnaK triggers the release of the substrate protein, thus completing the reaction cycle. Several rounds of ATP-dependent interactions between DnaJ, DnaK and GrpE are required for fully efficient folding. Also involved, together with DnaK and GrpE, in the DNA replication of plasmids through activation of initiation proteins. The polypeptide is Chaperone protein DnaJ (Rhodopseudomonas palustris (strain ATCC BAA-98 / CGA009)).